A 430-amino-acid chain; its full sequence is Ribosomal protein uS12 methylthiotransferase RimO (430 aa).

Positions 1 to 116 constitute an MTTase N-terminal domain; it reads MKIGIKVLGC…IAEAIEKATP (116 aa). [4Fe-4S] cluster is bound by residues cysteine 10, cysteine 46, cysteine 79, cysteine 146, cysteine 150, and cysteine 153. In terms of domain architecture, Radical SAM core spans 132–362; it reads SCNNSFAYVK…LIFQSQIAYE (231 aa). The 66-residue stretch at 365–430 folds into the TRAM domain; sequence KRFVGKNLNV…DEYDLKGELI (66 aa).

Belongs to the methylthiotransferase family. RimO subfamily. Requires [4Fe-4S] cluster as cofactor.

Its subcellular location is the cytoplasm. It catalyses the reaction L-aspartate(89)-[ribosomal protein uS12]-hydrogen + (sulfur carrier)-SH + AH2 + 2 S-adenosyl-L-methionine = 3-methylsulfanyl-L-aspartate(89)-[ribosomal protein uS12]-hydrogen + (sulfur carrier)-H + 5'-deoxyadenosine + L-methionine + A + S-adenosyl-L-homocysteine + 2 H(+). Catalyzes the methylthiolation of an aspartic acid residue of ribosomal protein uS12. In Pseudothermotoga lettingae (strain ATCC BAA-301 / DSM 14385 / NBRC 107922 / TMO) (Thermotoga lettingae), this protein is Ribosomal protein uS12 methylthiotransferase RimO.